The following is a 499-amino-acid chain: Probable malate:quinone oxidoreductase 4 (499 aa).

The protein belongs to the MQO family. It depends on FAD as a cofactor.

The enzyme catalyses (S)-malate + a quinone = a quinol + oxaloacetate. It participates in carbohydrate metabolism; tricarboxylic acid cycle; oxaloacetate from (S)-malate (quinone route): step 1/1. This chain is Probable malate:quinone oxidoreductase 4, found in Staphylococcus epidermidis (strain ATCC 35984 / DSM 28319 / BCRC 17069 / CCUG 31568 / BM 3577 / RP62A).